An 87-amino-acid polypeptide reads, in one-letter code: Cell division protein ZapA (87 aa).

Residues 64 to 87 (VHDYIKLKEEYDRLLQKLHKEKDE) adopt a coiled-coil conformation.

Belongs to the ZapA family. Type 2 subfamily. In terms of assembly, homodimer. Interacts with FtsZ.

It localises to the cytoplasm. Its function is as follows. Activator of cell division through the inhibition of FtsZ GTPase activity, therefore promoting FtsZ assembly into bundles of protofilaments necessary for the formation of the division Z ring. It is recruited early at mid-cell but it is not essential for cell division. The polypeptide is Cell division protein ZapA (Geobacillus sp. (strain WCH70)).